We begin with the raw amino-acid sequence, 473 residues long: Phosphatidylserine synthase 1 (473 aa).

N-acetylalanine is present on Ala2. The Cytoplasmic portion of the chain corresponds to 2 to 35; the sequence is ASCVGSRTLSKDDVNYKMHFRMINEQQVEDITID. The helical transmembrane segment at 36 to 56 threads the bilayer; that stretch reads FFYRPHTITLLSFTIVSLMYF. Residues 57 to 72 lie on the Lumenal side of the membrane; it reads AFTRDDSVPEDNIWRG. A helical membrane pass occupies residues 73–93; that stretch reads ILSVIFFFLIISVLAFPNGPF. The Cytoplasmic portion of the chain corresponds to 94-102; sequence TRPHPALWR. The helical transmembrane segment at 103–123 threads the bilayer; the sequence is MVFGLSVLYFLFLVFLLFLNF. The Lumenal portion of the chain corresponds to 124-186; the sequence is EQVKSLMYWL…AMKALLIRSY (63 aa). A helical membrane pass occupies residues 187-207; it reads GLCWTISITWELTELFFMHLL. The Cytoplasmic portion of the chain corresponds to 208-216; it reads PNFAECWWD. A helical membrane pass occupies residues 217-237; that stretch reads QVILDILLCNGGGIWLGMVVC. The Lumenal portion of the chain corresponds to 238–286; that stretch reads RFLEMRTYHWASFKDIHTTTGKIKRAVLQFTPASWTYVRWFDPKSSFQR. A helical membrane pass occupies residues 287–307; the sequence is VAGIYLFMIIWQLTELNTFFL. Over 308–319 the chain is Cytoplasmic; the sequence is KHIFVFQASHPL. Residues 320-342 form a helical membrane-spanning segment; sequence SWCRILFIGGITAPTVRQYYAYL. Residues 343 to 355 lie on the Lumenal side of the membrane; that stretch reads TDTQCKRVGTQCW. The chain crosses the membrane as a helical span at residues 356–376; that stretch reads VFGVIGFLEAIVCIKFGQDLF. At 377–383 the chain is on the cytoplasmic side; it reads SKTQILY. The helical transmembrane segment at 384 to 404 threads the bilayer; it reads VVLWLLCVAFTTFLCLYGMVW. At 405–473 the chain is on the lumenal side; that stretch reads YAEHYGHREK…SKVTNGVGKK (69 aa). Ser417, Ser425, and Ser454 each carry phosphoserine. The tract at residues 427–473 is disordered; sequence DISWPHGKGSKGSEDGPHKHPGNSESHSSRRRNRHSKSKVTNGVGKK. Residues 455 to 464 are compositionally biased toward basic residues; that stretch reads SRRRNRHSKS.

Belongs to the phosphatidyl serine synthase family.

Its subcellular location is the endoplasmic reticulum membrane. It catalyses the reaction a 1,2-diacyl-sn-glycero-3-phosphoethanolamine + L-serine = a 1,2-diacyl-sn-glycero-3-phospho-L-serine + ethanolamine. The catalysed reaction is a 1,2-diacyl-sn-glycero-3-phosphocholine + L-serine = a 1,2-diacyl-sn-glycero-3-phospho-L-serine + choline. The protein operates within phospholipid metabolism; phosphatidylserine biosynthesis. Functionally, catalyzes a base-exchange reaction in which the polar head group of phosphatidylethanolamine (PE) or phosphatidylcholine (PC) is replaced by L-serine. Catalyzes mainly the conversion of phosphatidylcholine but also converts, in vitro and to a lesser extent, phosphatidylethanolamine. This is Phosphatidylserine synthase 1 (PTDSS1) from Bos taurus (Bovine).